The chain runs to 288 residues: Chemotaxis protein methyltransferase 2 (288 aa).

Positions 1 to 280 (MNEIVITDTD…TGYYKPHKGK (280 aa)) constitute a CheR-type methyltransferase domain. Residues N76, T78, R82, E119, D145, 200–201 (NL), and 219–220 (RN) each bind S-adenosyl-L-methionine.

The catalysed reaction is L-glutamyl-[protein] + S-adenosyl-L-methionine = [protein]-L-glutamate 5-O-methyl ester + S-adenosyl-L-homocysteine. Methylation of the membrane-bound methyl-accepting chemotaxis proteins (MCP) to form gamma-glutamyl methyl ester residues in MCP. In Vibrio cholerae serotype O1 (strain ATCC 39315 / El Tor Inaba N16961), this protein is Chemotaxis protein methyltransferase 2 (cheR2).